The primary structure comprises 365 residues: Prostaglandin E2 receptor EP3 subtype (365 aa).

The interval 1–22 is disordered; sequence MASMWAPEHSAEAHSNLSSTTD. Over 1 to 30 the chain is Extracellular; that stretch reads MASMWAPEHSAEAHSNLSSTTDDCGSVSVA. The span at 13-22 shows a compositional bias: polar residues; sequence AHSNLSSTTD. Asn16 carries N-linked (GlcNAc...) asparagine glycosylation. A helical transmembrane segment spans residues 31–55; it reads FPITMMVTGFVGNALAMLLVSRSYR. At 56–68 the chain is on the cytoplasmic side; sequence RRESKRKKSFLLC. Residues 69–89 form a helical membrane-spanning segment; it reads IGWLALTDLVGQLLTSPVVIL. Topologically, residues 90–108 are extracellular; sequence VYLSQRRWEQLDPSGRLCT. The cysteines at positions 107 and 184 are disulfide-linked. A helical transmembrane segment spans residues 109–130; it reads FFGLTMTVFGLSSLLVASAMAV. At 131–151 the chain is on the cytoplasmic side; sequence ERALAIRAPHWYASHMKTRAT. Residues 152–173 form a helical membrane-spanning segment; it reads PVLLGVWLSVLAFALLPVLGVG. The Extracellular segment spans residues 174–203; that stretch reads RYSVQWPGTWCFISTGPAGNETDPAREPGS. N-linked (GlcNAc...) asparagine glycosylation occurs at Asn193. Residues 204 to 229 traverse the membrane as a helical segment; the sequence is VAFASAFACLGLLALVVTFACNLATI. Topologically, residues 230–259 are cytoplasmic; it reads KALVSRCRAKAAVSQSSAQWGRITTETAIQ. A helical membrane pass occupies residues 260 to 283; that stretch reads LMGIMCVLSVCWSPLLIMMLKMIF. Topologically, residues 284 to 303 are extracellular; the sequence is NQMSVEQCKTQMGKEKECNS. Residues 304-325 traverse the membrane as a helical segment; the sequence is FLIAVRLASLNQILDPWVYLLL. The Cytoplasmic portion of the chain corresponds to 326–365; the sequence is RKILLRKFCQIRDHTNYASSSTSLPCPGSSALMWSDQLER.

This sequence belongs to the G-protein coupled receptor 1 family. Interacts (via C-terminus) with MKLN1. Post-translationally, ligand binding is affected by cAMP-dependent phosphorylation in brain membranes. As to expression, detected in platelets. Kidney, uterus, and mastocytoma cells, and in a lesser amount in brain, thymus, lung, heart, stomach and spleen.

The protein localises to the cell membrane. Its function is as follows. Receptor for prostaglandin E2 (PGE2). Required for normal development of fever in response to pyrinogens, including IL1B, prostaglandin E2 and bacterial lipopolysaccharide (LPS). Required for normal potentiation of platelet aggregation by prostaglandin E2, and thus plays a role in the regulation of blood coagulation. Required for increased HCO3(-) secretion in the duodenum in response to mucosal acidification, and thereby contributes to the protection of the mucosa against acid-induced ulceration. Not required for normal kidney function, normal urine volume and osmolality. Receptor for prostaglandin E2 (PGE2); ligand binding activates a signaling cascade via G(i) proteins that leads to inhibition of adenylate cyclase. Shows high agonist-independent constitutive inhibition of adenylate cyclase. Functionally, receptor for prostaglandin E2 (PGE2); ligand binding activates a signaling cascade via G(i) proteins that leads to inhibition of adenylate cyclase. Requires much higher ligand concentrations than isoform Alpha for activation. Does not display agonist-independent constitutive inhibition of adenylate cyclase. In terms of biological role, receptor for prostaglandin E2 (PGE2); ligand binding can activate several distinct signaling cascades, resulting in activation or inhibition of adenylate cyclase. This chain is Prostaglandin E2 receptor EP3 subtype (Ptger3), found in Mus musculus (Mouse).